The sequence spans 304 residues: Release factor glutamine methyltransferase (304 aa).

Aspartate 144 and asparagine 188 together coordinate S-adenosyl-L-methionine. Position 188–191 (188–191) interacts with substrate; it reads NPPY.

This sequence belongs to the protein N5-glutamine methyltransferase family. PrmC subfamily.

It carries out the reaction L-glutaminyl-[peptide chain release factor] + S-adenosyl-L-methionine = N(5)-methyl-L-glutaminyl-[peptide chain release factor] + S-adenosyl-L-homocysteine + H(+). In terms of biological role, methylates the class 1 translation termination release factors RF1/PrfA and RF2/PrfB on the glutamine residue of the universally conserved GGQ motif. The protein is Release factor glutamine methyltransferase of Mycobacterium tuberculosis (strain CDC 1551 / Oshkosh).